Reading from the N-terminus, the 87-residue chain is Small ribosomal subunit protein bS16 (87 aa).

Belongs to the bacterial ribosomal protein bS16 family.

This chain is Small ribosomal subunit protein bS16, found in Ehrlichia ruminantium (strain Welgevonden).